The chain runs to 51 residues: Large ribosomal subunit protein eL39 (51 aa).

The protein belongs to the eukaryotic ribosomal protein eL39 family.

The sequence is that of Large ribosomal subunit protein eL39 from Picrophilus torridus (strain ATCC 700027 / DSM 9790 / JCM 10055 / NBRC 100828 / KAW 2/3).